The following is a 295-amino-acid chain: Aspartate carbamoyltransferase catalytic subunit (295 aa).

Carbamoyl phosphate-binding residues include arginine 54 and threonine 55. Lysine 82 is a binding site for L-aspartate. Carbamoyl phosphate-binding residues include arginine 104, histidine 132, and glutamine 135. Positions 165 and 218 each coordinate L-aspartate. Carbamoyl phosphate contacts are provided by glycine 257 and proline 258.

It belongs to the aspartate/ornithine carbamoyltransferase superfamily. ATCase family. Heterododecamer (2C3:3R2) of six catalytic PyrB chains organized as two trimers (C3), and six regulatory PyrI chains organized as three dimers (R2).

The catalysed reaction is carbamoyl phosphate + L-aspartate = N-carbamoyl-L-aspartate + phosphate + H(+). Its pathway is pyrimidine metabolism; UMP biosynthesis via de novo pathway; (S)-dihydroorotate from bicarbonate: step 2/3. Catalyzes the condensation of carbamoyl phosphate and aspartate to form carbamoyl aspartate and inorganic phosphate, the committed step in the de novo pyrimidine nucleotide biosynthesis pathway. The polypeptide is Aspartate carbamoyltransferase catalytic subunit (Wolbachia pipientis wMel).